The sequence spans 539 residues: Chaperonin GroEL (539 aa).

Residues Thr29 to Pro32, Asp86 to Thr90, Gly413, Asn476 to Ala478, and Asp492 each bind ATP.

It belongs to the chaperonin (HSP60) family. In terms of assembly, forms a cylinder of 14 subunits composed of two heptameric rings stacked back-to-back. Interacts with the co-chaperonin GroES.

It localises to the cytoplasm. It catalyses the reaction ATP + H2O + a folded polypeptide = ADP + phosphate + an unfolded polypeptide.. In terms of biological role, together with its co-chaperonin GroES, plays an essential role in assisting protein folding. The GroEL-GroES system forms a nano-cage that allows encapsulation of the non-native substrate proteins and provides a physical environment optimized to promote and accelerate protein folding. This is Chaperonin GroEL from Parageobacillus thermoglucosidasius (Geobacillus thermoglucosidasius).